Consider the following 248-residue polypeptide: tRNA pseudouridine synthase A (248 aa).

Asp53 serves as the catalytic Nucleophile. A substrate-binding site is contributed by Tyr111.

Belongs to the tRNA pseudouridine synthase TruA family. Homodimer.

It catalyses the reaction uridine(38/39/40) in tRNA = pseudouridine(38/39/40) in tRNA. Formation of pseudouridine at positions 38, 39 and 40 in the anticodon stem and loop of transfer RNAs. The chain is tRNA pseudouridine synthase A from Listeria innocua serovar 6a (strain ATCC BAA-680 / CLIP 11262).